The chain runs to 416 residues: UDP-N-acetylglucosamine 1-carboxyvinyltransferase (416 aa).

22 to 23 (KN) is a binding site for phosphoenolpyruvate. UDP-N-acetyl-alpha-D-glucosamine is bound at residue arginine 91. Cysteine 115 (proton donor) is an active-site residue. Cysteine 115 is modified (2-(S-cysteinyl)pyruvic acid O-phosphothioketal). Residues aspartate 304 and isoleucine 326 each contribute to the UDP-N-acetyl-alpha-D-glucosamine site.

It belongs to the EPSP synthase family. MurA subfamily.

It localises to the cytoplasm. It carries out the reaction phosphoenolpyruvate + UDP-N-acetyl-alpha-D-glucosamine = UDP-N-acetyl-3-O-(1-carboxyvinyl)-alpha-D-glucosamine + phosphate. It participates in cell wall biogenesis; peptidoglycan biosynthesis. Cell wall formation. Adds enolpyruvyl to UDP-N-acetylglucosamine. The sequence is that of UDP-N-acetylglucosamine 1-carboxyvinyltransferase from Thermodesulfovibrio yellowstonii (strain ATCC 51303 / DSM 11347 / YP87).